The primary structure comprises 220 residues: GTP cyclohydrolase 1 (220 aa).

Residues Cys-109, His-112, and Cys-180 each contribute to the Zn(2+) site.

It belongs to the GTP cyclohydrolase I family. As to quaternary structure, homomer.

It catalyses the reaction GTP + H2O = 7,8-dihydroneopterin 3'-triphosphate + formate + H(+). It participates in cofactor biosynthesis; 7,8-dihydroneopterin triphosphate biosynthesis; 7,8-dihydroneopterin triphosphate from GTP: step 1/1. This Edwardsiella ictaluri (strain 93-146) protein is GTP cyclohydrolase 1.